The sequence spans 316 residues: Low affinity immunoglobulin gamma Fc region receptor II-a (316 aa).

The N-terminal stretch at 1 to 35 is a signal peptide; the sequence is MAMETQMSQNVCPRNLWLLQPLTVLLLLASADSQA. Over 36-216 the chain is Extracellular; the sequence is APPKAVLKLE…PSVGSSSPVG (181 aa). Ig-like C2-type domains lie at 38–117 and 121–203; these read PKAV…VHLT and EWLV…VTIT. 2 disulfides stabilise this stretch: cysteine 61/cysteine 103 and cysteine 142/cysteine 186. 3 N-linked (GlcNAc...) asparagine glycosylation sites follow: asparagine 96, asparagine 170, and asparagine 177. Residues 217 to 239 form a helical membrane-spanning segment; it reads IIVAVVIATAVAAIVAAVVALIY. The Cytoplasmic segment spans residues 240 to 316; it reads CRKKRISANS…PPNDHVNSNN (77 aa). A phosphotyrosine; by SRC-type Tyr-kinases mark is found at tyrosine 287 and tyrosine 303.

Interacts with INPP5D/SHIP1 and INPPL1/SHIP2, regulating its function. Interacts with APCS and FGR. Interacts with HCK. In terms of processing, phosphorylated by SRC-type Tyr-kinases such as HCK, LYN, BLK, FYN and SYK.

Its subcellular location is the cell membrane. Functionally, binds to the Fc region of immunoglobulins gamma. Low affinity receptor. By binding to IgG it initiates cellular responses against pathogens and soluble antigens. Promotes phagocytosis of opsonized antigens. The chain is Low affinity immunoglobulin gamma Fc region receptor II-a (FCGR2A) from Pan troglodytes (Chimpanzee).